We begin with the raw amino-acid sequence, 428 residues long: Keratin, type I cytoskeletal 18-A (428 aa).

The segment at 2-78 is head; the sequence is SSSRSVYSSS…NVNLFGGVQN (77 aa). The segment at 24–45 is disordered; that stretch reads SAPRFTPGSSAASVHAGAGGSG. The interval 79-114 is coil 1A; that stretch reads EKETMQDLNDRLASYLERVRSLESANKKLEVQIRQH. The region spanning 79 to 389 is the IF rod domain; the sequence is EKETMQDLND…RLLEGDSFDL (311 aa). The tract at residues 115–130 is linker 1; the sequence is TEKKGPAKDWSPYYMT. Positions 131–222 are coil 1B; that stretch reads IEDLKKQVFN…KNHQDDVNEL (92 aa). A linker 12 region spans residues 223-246; the sequence is QAQIASSAVTVEVDAPKSQDLGKI. Positions 247–384 are coil 2; sequence MADLRAQYDE…IQTYRRLLEG (138 aa). The tail stretch occupies residues 385-428; that stretch reads DSFDLQDAVPVVTTQTVKKVITTTQRLVDGKVVAESNNTEVIKS.

The protein belongs to the intermediate filament family. In terms of assembly, heterotetramer of two type I and two type II keratins. Keratin-18 associates with keratin-8. Proteolytically cleaved by caspases during epithelial cell apoptosis. Expressed at high levels in notochord and low levels in adult liver.

In terms of biological role, when phosphorylated, plays a role in filament reorganization. The chain is Keratin, type I cytoskeletal 18-A (krt18-a) from Xenopus laevis (African clawed frog).